A 155-amino-acid polypeptide reads, in one-letter code: MKIKILCFGKLDKKFYIDAFNDYFKRLKKYVDLEIIELKEEVNGELNKIKDENSNLLLKKLQNYKDFEKVVLDVNSRLISTENLVEIIKTNLNYKSAKILFIIGPSDGYSKSFLNSFTNKFSLAKITLPHQLCRIVLIEQIYRVFKIINNEKYHK.

S-adenosyl-L-methionine contacts are provided by residues Leu-72, Gly-104, and 123-128 (LAKITL).

This sequence belongs to the RNA methyltransferase RlmH family. As to quaternary structure, homodimer.

Its subcellular location is the cytoplasm. It catalyses the reaction pseudouridine(1915) in 23S rRNA + S-adenosyl-L-methionine = N(3)-methylpseudouridine(1915) in 23S rRNA + S-adenosyl-L-homocysteine + H(+). Functionally, specifically methylates the pseudouridine at position 1915 (m3Psi1915) in 23S rRNA. The chain is Ribosomal RNA large subunit methyltransferase H from Mycoplasma mycoides subsp. mycoides SC (strain CCUG 32753 / NCTC 10114 / PG1).